Here is a 260-residue protein sequence, read N- to C-terminus: Thymidylate synthase (260 aa).

Arg21 provides a ligand contact to dUMP. His51 is a (6R)-5,10-methylene-5,6,7,8-tetrahydrofolate binding site. Position 122 to 123 (Arg122 to Arg123) interacts with dUMP. The Nucleophile role is filled by Cys142. DUMP contacts are provided by residues Arg162–Asp165, Asn173, and His203–Tyr205. Asp165 is a binding site for (6R)-5,10-methylene-5,6,7,8-tetrahydrofolate. Ala259 contacts (6R)-5,10-methylene-5,6,7,8-tetrahydrofolate.

It belongs to the thymidylate synthase family. Bacterial-type ThyA subfamily. In terms of assembly, homodimer.

The protein localises to the cytoplasm. It carries out the reaction dUMP + (6R)-5,10-methylene-5,6,7,8-tetrahydrofolate = 7,8-dihydrofolate + dTMP. The protein operates within pyrimidine metabolism; dTTP biosynthesis. Catalyzes the reductive methylation of 2'-deoxyuridine-5'-monophosphate (dUMP) to 2'-deoxythymidine-5'-monophosphate (dTMP) while utilizing 5,10-methylenetetrahydrofolate (mTHF) as the methyl donor and reductant in the reaction, yielding dihydrofolate (DHF) as a by-product. This enzymatic reaction provides an intracellular de novo source of dTMP, an essential precursor for DNA biosynthesis. This chain is Thymidylate synthase, found in Methylococcus capsulatus (strain ATCC 33009 / NCIMB 11132 / Bath).